We begin with the raw amino-acid sequence, 262 residues long: Flap endonuclease Xni (262 aa).

Position 105 (aspartate 105) interacts with Mg(2+). One can recognise a 5'-3' exonuclease domain in the interval 162–257 (ERSQFLDLMA…FRVIDSPPEK (96 aa)). 5 residues coordinate K(+): leucine 172, alanine 173, proline 181, isoleucine 183, and isoleucine 186. An interaction with DNA region spans residues 185 to 190 (GIGPKS).

Belongs to the Xni family. Mg(2+) serves as cofactor. It depends on K(+) as a cofactor.

Functionally, has flap endonuclease activity. During DNA replication, flap endonucleases cleave the 5'-overhanging flap structure that is generated by displacement synthesis when DNA polymerase encounters the 5'-end of a downstream Okazaki fragment. This chain is Flap endonuclease Xni, found in Shewanella baltica (strain OS155 / ATCC BAA-1091).